The sequence spans 287 residues: Bifunctional protein FolD (287 aa).

Residues 160-162 (GRS), Ser-189, and Ile-230 each bind NADP(+).

This sequence belongs to the tetrahydrofolate dehydrogenase/cyclohydrolase family. As to quaternary structure, homodimer.

The enzyme catalyses (6R)-5,10-methylene-5,6,7,8-tetrahydrofolate + NADP(+) = (6R)-5,10-methenyltetrahydrofolate + NADPH. The catalysed reaction is (6R)-5,10-methenyltetrahydrofolate + H2O = (6R)-10-formyltetrahydrofolate + H(+). It functions in the pathway one-carbon metabolism; tetrahydrofolate interconversion. Its function is as follows. Catalyzes the oxidation of 5,10-methylenetetrahydrofolate to 5,10-methenyltetrahydrofolate and then the hydrolysis of 5,10-methenyltetrahydrofolate to 10-formyltetrahydrofolate. This is Bifunctional protein FolD from Chlamydia felis (strain Fe/C-56) (Chlamydophila felis).